Here is a 550-residue protein sequence, read N- to C-terminus: Chaperonin GroEL (550 aa).

Residues 29–32 (TAGP), Lys-50, 86–90 (DGTTT), Gly-417, and Asp-499 contribute to the ATP site.

The protein belongs to the chaperonin (HSP60) family. Forms a cylinder of 14 subunits composed of two heptameric rings stacked back-to-back. Interacts with the co-chaperonin GroES.

It is found in the cytoplasm. The enzyme catalyses ATP + H2O + a folded polypeptide = ADP + phosphate + an unfolded polypeptide.. In terms of biological role, together with its co-chaperonin GroES, plays an essential role in assisting protein folding. The GroEL-GroES system forms a nano-cage that allows encapsulation of the non-native substrate proteins and provides a physical environment optimized to promote and accelerate protein folding. The polypeptide is Chaperonin GroEL (Ehrlichia chaffeensis).